A 418-amino-acid polypeptide reads, in one-letter code: UDP-N-acetyl-D-mannosamine dehydrogenase (418 aa).

NAD(+) contacts are provided by Tyr10, Ile11, Asp30, Thr85, and Thr119. UDP-N-acetyl-alpha-D-mannosaminouronate contacts are provided by Arg152, Val153, Lys204, Asn208, Arg211, His242, Arg244, Thr249, and Gly255. Lys204 functions as the Proton donor/acceptor in the catalytic mechanism. The Nucleophile role is filled by Cys258. Residue Lys261 coordinates NAD(+). UDP-N-acetyl-alpha-D-mannosaminouronate contacts are provided by Tyr318 and Lys319. Arg326 is an NAD(+) binding site. Arg398 is a binding site for UDP-N-acetyl-alpha-D-mannosaminouronate.

It belongs to the UDP-glucose/GDP-mannose dehydrogenase family. As to quaternary structure, homodimer.

It catalyses the reaction UDP-N-acetyl-alpha-D-mannosamine + 2 NAD(+) + H2O = UDP-N-acetyl-alpha-D-mannosaminouronate + 2 NADH + 3 H(+). Catalyzes the four-electron oxidation of UDP-N-acetyl-D-mannosamine (UDP-ManNAc), reducing NAD(+) and releasing UDP-N-acetylmannosaminuronic acid (UDP-ManNAcA). The protein is UDP-N-acetyl-D-mannosamine dehydrogenase of Pyrococcus horikoshii (strain ATCC 700860 / DSM 12428 / JCM 9974 / NBRC 100139 / OT-3).